We begin with the raw amino-acid sequence, 340 residues long: Phosphoribosylformylglycinamidine cyclo-ligase (340 aa).

This sequence belongs to the AIR synthase family.

The protein localises to the cytoplasm. The enzyme catalyses 2-formamido-N(1)-(5-O-phospho-beta-D-ribosyl)acetamidine + ATP = 5-amino-1-(5-phospho-beta-D-ribosyl)imidazole + ADP + phosphate + H(+). The protein operates within purine metabolism; IMP biosynthesis via de novo pathway; 5-amino-1-(5-phospho-D-ribosyl)imidazole from N(2)-formyl-N(1)-(5-phospho-D-ribosyl)glycinamide: step 2/2. This Macrococcus caseolyticus (strain JCSC5402) (Macrococcoides caseolyticum) protein is Phosphoribosylformylglycinamidine cyclo-ligase.